Consider the following 100-residue polypeptide: Putative pterin-4-alpha-carbinolamine dehydratase (100 aa).

It belongs to the pterin-4-alpha-carbinolamine dehydratase family.

The enzyme catalyses (4aS,6R)-4a-hydroxy-L-erythro-5,6,7,8-tetrahydrobiopterin = (6R)-L-erythro-6,7-dihydrobiopterin + H2O. The chain is Putative pterin-4-alpha-carbinolamine dehydratase from Bradyrhizobium diazoefficiens (strain JCM 10833 / BCRC 13528 / IAM 13628 / NBRC 14792 / USDA 110).